Consider the following 271-residue polypeptide: Formamidopyrimidine-DNA glycosylase (271 aa).

Proline 2 (schiff-base intermediate with DNA) is an active-site residue. Catalysis depends on glutamate 3, which acts as the Proton donor. Lysine 57 serves as the catalytic Proton donor; for beta-elimination activity. Positions 90, 109, and 151 each coordinate DNA. An FPG-type zinc finger spans residues 236–270; sequence HVYGRGGETCTQCGNLLSEIRLGQRTTVFCGICQT. Arginine 260 functions as the Proton donor; for delta-elimination activity in the catalytic mechanism.

It belongs to the FPG family. Monomer. It depends on Zn(2+) as a cofactor.

It carries out the reaction Hydrolysis of DNA containing ring-opened 7-methylguanine residues, releasing 2,6-diamino-4-hydroxy-5-(N-methyl)formamidopyrimidine.. The catalysed reaction is 2'-deoxyribonucleotide-(2'-deoxyribose 5'-phosphate)-2'-deoxyribonucleotide-DNA = a 3'-end 2'-deoxyribonucleotide-(2,3-dehydro-2,3-deoxyribose 5'-phosphate)-DNA + a 5'-end 5'-phospho-2'-deoxyribonucleoside-DNA + H(+). Functionally, involved in base excision repair of DNA damaged by oxidation or by mutagenic agents. Acts as a DNA glycosylase that recognizes and removes damaged bases. Has a preference for oxidized purines, such as 7,8-dihydro-8-oxoguanine (8-oxoG). Has AP (apurinic/apyrimidinic) lyase activity and introduces nicks in the DNA strand. Cleaves the DNA backbone by beta-delta elimination to generate a single-strand break at the site of the removed base with both 3'- and 5'-phosphates. The chain is Formamidopyrimidine-DNA glycosylase from Shewanella sp. (strain MR-4).